The sequence spans 315 residues: Methionyl-tRNA formyltransferase (315 aa).

A (6S)-5,6,7,8-tetrahydrofolate-binding site is contributed by 113–116 (SLLP).

This sequence belongs to the Fmt family.

The enzyme catalyses L-methionyl-tRNA(fMet) + (6R)-10-formyltetrahydrofolate = N-formyl-L-methionyl-tRNA(fMet) + (6S)-5,6,7,8-tetrahydrofolate + H(+). In terms of biological role, attaches a formyl group to the free amino group of methionyl-tRNA(fMet). The formyl group appears to play a dual role in the initiator identity of N-formylmethionyl-tRNA by promoting its recognition by IF2 and preventing the misappropriation of this tRNA by the elongation apparatus. This is Methionyl-tRNA formyltransferase from Salmonella enteritidis PT4 (strain P125109).